Consider the following 150-residue polypeptide: Cytochrome c oxidase subunit 5A, mitochondrial (150 aa).

Residues 1–41 constitute a mitochondrion transit peptide; it reads MLGAALRRCAVAATTRADPRGLLHSARTPGPAVAIQSVRCY. The SIFI-degron signature appears at 2-17; sequence LGAALRRCAVAATTRA. N6-acetyllysine is present on residues lysine 87 and lysine 113. At threonine 141 the chain carries Phosphothreonine.

The protein belongs to the cytochrome c oxidase subunit 5A family. As to quaternary structure, component of the cytochrome c oxidase (complex IV, CIV), a multisubunit enzyme composed of 14 subunits. The complex is composed of a catalytic core of 3 subunits MT-CO1, MT-CO2 and MT-CO3, encoded in the mitochondrial DNA, and 11 supernumerary subunits COX4I1 (or COX4I2), COX5A, COX5B, COX6A1 (or COX6A2), COX6B1 (or COX6B2), COX6C, COX7A2 (or COX7A1), COX7B, COX7C, COX8A and NDUFA4, which are encoded in the nuclear genome. The complex exists as a monomer or a dimer and forms supercomplexes (SCs) in the inner mitochondrial membrane with NADH-ubiquinone oxidoreductase (complex I, CI) and ubiquinol-cytochrome c oxidoreductase (cytochrome b-c1 complex, complex III, CIII), resulting in different assemblies (supercomplex SCI(1)III(2)IV(1) and megacomplex MCI(2)III(2)IV(2)). Interacts with AFG1L. Interacts with RAB5IF. Post-translationally, in response to mitochondrial stress, the precursor protein is ubiquitinated by the SIFI complex in the cytoplasm before mitochondrial import, leading to its degradation. Within the SIFI complex, UBR4 initiates ubiquitin chain that are further elongated or branched by KCMF1.

It localises to the mitochondrion inner membrane. The protein operates within energy metabolism; oxidative phosphorylation. Functionally, component of the cytochrome c oxidase, the last enzyme in the mitochondrial electron transport chain which drives oxidative phosphorylation. The respiratory chain contains 3 multisubunit complexes succinate dehydrogenase (complex II, CII), ubiquinol-cytochrome c oxidoreductase (cytochrome b-c1 complex, complex III, CIII) and cytochrome c oxidase (complex IV, CIV), that cooperate to transfer electrons derived from NADH and succinate to molecular oxygen, creating an electrochemical gradient over the inner membrane that drives transmembrane transport and the ATP synthase. Cytochrome c oxidase is the component of the respiratory chain that catalyzes the reduction of oxygen to water. Electrons originating from reduced cytochrome c in the intermembrane space (IMS) are transferred via the dinuclear copper A center (CU(A)) of subunit 2 and heme A of subunit 1 to the active site in subunit 1, a binuclear center (BNC) formed by heme A3 and copper B (CU(B)). The BNC reduces molecular oxygen to 2 water molecules using 4 electrons from cytochrome c in the IMS and 4 protons from the mitochondrial matrix. In Homo sapiens (Human), this protein is Cytochrome c oxidase subunit 5A, mitochondrial (COX5A).